The primary structure comprises 373 residues: GTP cyclohydrolase 1 type 2 homolog (373 aa).

Positions 67, 68, 106, 333, and 336 each coordinate a divalent metal cation.

Belongs to the GTP cyclohydrolase I type 2/NIF3 family. Homohexamer.

In Listeria innocua serovar 6a (strain ATCC BAA-680 / CLIP 11262), this protein is GTP cyclohydrolase 1 type 2 homolog.